The primary structure comprises 1129 residues: Phospholipid-transporting ATPase 11C (1129 aa).

Topologically, residues 1-83 (MFRRTLNRLC…IIFLVQVTVD (83 aa)) are cytoplasmic. A helical transmembrane segment spans residues 84-104 (TPTSPVTSGLPLFFVITVTAI). Topologically, residues 105-287 (KQGYEDWLRH…SQKCSAVEKS (183 aa)) are extracellular. A helical transmembrane segment spans residues 288 to 308 (INAFLIVYLFILLTKAAVCTT). Residues 309–343 (LKYVWQSSPYNDEPWYNQKTQKERETFQVLKMFTD) lie on the Cytoplasmic side of the membrane. Residues 344-364 (FLSFMVLFNFIIPVSMYVTVE) form a helical membrane-spanning segment. The Extracellular segment spans residues 365-876 (MQKFLGSFFI…YVRIAHLVQY (512 aa)). Aspartate 409 serves as the catalytic 4-aspartylphosphate intermediate. Positions 409, 410, and 411 each coordinate ATP. Aspartate 409 contacts Mg(2+). Residue threonine 411 coordinates Mg(2+). Serine 442 carries the phosphoserine modification. ATP contacts are provided by glutamate 498, phenylalanine 540, lysine 563, and arginine 594. The stretch at 607-643 (DFERINAQLVEAKMALQDREEKLEKVFDEIETNMNLI) forms a coiled coil. Residues threonine 674, glycine 675, and aspartate 676 each contribute to the ATP site. Residues 695–726 (TELLELTTKTIEESERKEDRLHELLIEYRKKL) adopt a coiled-coil conformation. ATP contacts are provided by arginine 789 and lysine 795. Position 816 (aspartate 816) interacts with Mg(2+). Residues asparagine 819 and aspartate 820 each contribute to the ATP site. Aspartate 820 is a binding site for Mg(2+). Residues 877–897 (FFYKNLCFILPQFLYQFFCGF) traverse the membrane as a helical segment. Topologically, residues 898–905 (SQQPLYDA) are cytoplasmic. The chain crosses the membrane as a helical span at residues 906 to 926 (AYLTMYNICFTSLPILAYSLL). The Extracellular segment spans residues 927-952 (EQHINIDTLTADPRLYMKITGNAMLQ). A helical membrane pass occupies residues 953–973 (LGPFLHWTFLAAFEGTVFFFG). At 974-988 (TYFLFQTSSLEDNGK) the chain is on the cytoplasmic side. A helical transmembrane segment spans residues 989–1009 (IYGNWTFGTIVFTVLVFTVTL). Topologically, residues 1010-1023 (KLALDTRFWTWINH) are extracellular. Residues 1024–1044 (FVIWGSLAFYVFFSFFWGGII) traverse the membrane as a helical segment. The Cytoplasmic portion of the chain corresponds to 1045–1066 (WPFLKQQRMYFVFAQMLCSVST). Residues 1067 to 1087 (WLAIILLIFISLFPEILLIVV) traverse the membrane as a helical segment. At 1088–1129 (KNVRRRSARRNLSCRRASDSLSARPSVRPLLLRTFSDESNIL) the chain is on the extracellular side. A phosphoserine mark is found at serine 1105, serine 1113, and serine 1123. Residues 1113-1118 (SVRPLL) carry the Di-leucine motif motif.

It belongs to the cation transport ATPase (P-type) (TC 3.A.3) family. Type IV subfamily. As to quaternary structure, component of a P4-ATPase flippase complex which consists of a catalytic alpha subunit ATP11C and an accessory beta subunit TMEM30A. The cofactor is Mg(2+). Post-translationally, proteolytically cleaved by CASP3, CASP6 and CASP7. Phosphorylated at Ser-1113 likely by PRKCA; this creates a functional di-leucine motif that is sufficient for endocytosis. Widely expressed. Expressed in retina, brain, liver and testes (at protein level). Expressed in lung, bone marrow, lymph nodes, prostate, ovary and uterus. Expressed in fetus.

It is found in the cell membrane. Its subcellular location is the endoplasmic reticulum membrane. The protein resides in the early endosome membrane. The protein localises to the recycling endosome membrane. The enzyme catalyses ATP + H2O + phospholipidSide 1 = ADP + phosphate + phospholipidSide 2.. It catalyses the reaction a 1,2-diacyl-sn-glycero-3-phospho-L-serine(out) + ATP + H2O = a 1,2-diacyl-sn-glycero-3-phospho-L-serine(in) + ADP + phosphate + H(+). The catalysed reaction is a 1,2-diacyl-sn-glycero-3-phosphoethanolamine(out) + ATP + H2O = a 1,2-diacyl-sn-glycero-3-phosphoethanolamine(in) + ADP + phosphate + H(+). In terms of biological role, catalytic component of a P4-ATPase flippase complex which catalyzes the hydrolysis of ATP coupled to the transport of aminophospholipids, phosphatidylserines (PS) and phosphatidylethanolamines (PE), from the outer to the inner leaflet of the plasma membrane. Major PS-flippase in immune cell subsets. In erythrocyte plasma membrane, it is required to maintain PS in the inner leaflet preventing its exposure on the surface. This asymmetric distribution is critical for the survival of erythrocytes in circulation since externalized PS is a phagocytic signal for erythrocyte clearance by splenic macrophages. Required for B cell differentiation past the pro-B cell stage. Seems to mediate PS flipping in pro-B cells. May be involved in the transport of cholestatic bile acids. This Mus musculus (Mouse) protein is Phospholipid-transporting ATPase 11C.